A 314-amino-acid chain; its full sequence is MGVGRSEGGRRGAALGVLLALGVALLAVGSASEYDYVSYQSDLGPYPGGRFYTKPHQCVAIPADLRLCHSVGYDKMVLPNLLDHETMAEVKHQASSWVPLLNKNCHMGTQVFLCSLFAPVCLDRPVYPCRWLCEAVRDSCEPVMQFFGFFWPEMLKCDQFPQDYVCIAMTTPNATEVSRPKGTTVCPPCDNEMKSEAIVEHLCASEFALKMTIKEVKKENGDKVIIPRKRKALKLGPIRKKNLKKLVLLLKNGADCPCHQLDNLGHHFLIMGRQVKTQHLLTAIYKWDKKNKEFKKFMKKVKAPDCPTFPSVFK.

Positions 1–31 (MGVGRSEGGRRGAALGVLLALGVALLAVGSA) are cleaved as a signal peptide. Residues 53-169 (TKPHQCVAIP…FPQDYVCIAM (117 aa)) form the FZ domain. Intrachain disulfides connect Cys-58–Cys-121, Cys-68–Cys-114, Cys-105–Cys-140, Cys-129–Cys-166, and Cys-133–Cys-157. Asn-173 carries an N-linked (GlcNAc...) asparagine glycan. Intrachain disulfides connect Cys-186/Cys-256, Cys-189/Cys-258, and Cys-203/Cys-306. An NTR domain is found at 186–306 (CPPCDNEMKS…FMKKVKAPDC (121 aa)).

The protein belongs to the secreted frizzled-related protein (sFRP) family.

The protein localises to the secreted. Soluble frizzled-related proteins (sFRPS) function as modulators of Wnt signaling through direct interaction with Wnts. They have a role in regulating cell growth and differentiation in specific cell types. The polypeptide is Secreted frizzled-related protein 1 (SFRP1) (Gallus gallus (Chicken)).